Consider the following 152-residue polypeptide: Large ribosomal subunit protein bL9 (152 aa).

It belongs to the bacterial ribosomal protein bL9 family.

Binds to the 23S rRNA. This is Large ribosomal subunit protein bL9 from Synechococcus sp. (strain WH7803).